Here is a 684-residue protein sequence, read N- to C-terminus: Threonine--tRNA ligase (684 aa).

The TGS domain occupies 1–66; that stretch reads MTVPATDSWP…DTDAEVVPVA (66 aa). The interval 261–567 is catalytic; it reads DHRKLGSELD…LTEHYAGAFP (307 aa). Positions 366, 417, and 544 each coordinate Zn(2+).

Belongs to the class-II aminoacyl-tRNA synthetase family. In terms of assembly, homodimer. Zn(2+) is required as a cofactor.

It is found in the cytoplasm. It carries out the reaction tRNA(Thr) + L-threonine + ATP = L-threonyl-tRNA(Thr) + AMP + diphosphate + H(+). In terms of biological role, catalyzes the attachment of threonine to tRNA(Thr) in a two-step reaction: L-threonine is first activated by ATP to form Thr-AMP and then transferred to the acceptor end of tRNA(Thr). Also edits incorrectly charged L-seryl-tRNA(Thr). This is Threonine--tRNA ligase from Mycobacterium avium (strain 104).